Reading from the N-terminus, the 400-residue chain is Phosphoribosylamine--glycine ligase (400 aa).

Residues Lys99–Arg303 form the ATP-grasp domain. Ile125–Ser186 serves as a coordination point for ATP. Glu273 and Asn275 together coordinate Mg(2+).

Belongs to the GARS family. It depends on Mg(2+) as a cofactor. Mn(2+) is required as a cofactor.

It catalyses the reaction 5-phospho-beta-D-ribosylamine + glycine + ATP = N(1)-(5-phospho-beta-D-ribosyl)glycinamide + ADP + phosphate + H(+). It participates in purine metabolism; IMP biosynthesis via de novo pathway; N(1)-(5-phospho-D-ribosyl)glycinamide from 5-phospho-alpha-D-ribose 1-diphosphate: step 2/2. This chain is Phosphoribosylamine--glycine ligase, found in Thermotoga maritima (strain ATCC 43589 / DSM 3109 / JCM 10099 / NBRC 100826 / MSB8).